A 396-amino-acid polypeptide reads, in one-letter code: Small ribosomal subunit protein uS9m (396 aa).

Residues 374-396 (PRVRERKKPGQEGARRKFTWKKR) form a disordered region.

This sequence belongs to the universal ribosomal protein uS9 family. Component of the mitochondrial ribosome small subunit (28S) which comprises a 12S rRNA and about 30 distinct proteins.

It is found in the mitochondrion. The protein is Small ribosomal subunit protein uS9m (MRPS9) of Bos taurus (Bovine).